The following is a 311-amino-acid chain: Long form salivary protein D7L1 (311 aa).

The N-terminal stretch at 1 to 21 (MIVTGVLLFILLELFAQGSQA) is a signal peptide. 4 disulfide bridges follow: Cys-37–Cys-73, Cys-69–Cys-128, Cys-178–Cys-211, and Cys-252–Cys-263.

The protein belongs to the PBP/GOBP family.

It is found in the secreted. Its function is as follows. Modulates blood feeding of female mosquitoes on vertebrate species by binding and sequestering different mediators involved in the host response. Binds leukotriene C4 and U-46619, a stable analog of thromboxane A2. Inhibits agonist-induced platelet aggregation. Exhibits vasodilating activity. In Anopheles gambiae (African malaria mosquito), this protein is Long form salivary protein D7L1.